The chain runs to 619 residues: Dihydroxy-acid dehydratase (619 aa).

Residue aspartate 81 coordinates Mg(2+). Residue cysteine 122 participates in [2Fe-2S] cluster binding. Residues aspartate 123 and lysine 124 each coordinate Mg(2+). Lysine 124 bears the N6-carboxylysine mark. Cysteine 195 contributes to the [2Fe-2S] cluster binding site. Glutamate 494 lines the Mg(2+) pocket. Serine 520 (proton acceptor) is an active-site residue.

Belongs to the IlvD/Edd family. In terms of assembly, homodimer. It depends on [2Fe-2S] cluster as a cofactor. Mg(2+) serves as cofactor.

It carries out the reaction (2R)-2,3-dihydroxy-3-methylbutanoate = 3-methyl-2-oxobutanoate + H2O. It catalyses the reaction (2R,3R)-2,3-dihydroxy-3-methylpentanoate = (S)-3-methyl-2-oxopentanoate + H2O. Its pathway is amino-acid biosynthesis; L-isoleucine biosynthesis; L-isoleucine from 2-oxobutanoate: step 3/4. It functions in the pathway amino-acid biosynthesis; L-valine biosynthesis; L-valine from pyruvate: step 3/4. Functionally, functions in the biosynthesis of branched-chain amino acids. Catalyzes the dehydration of (2R,3R)-2,3-dihydroxy-3-methylpentanoate (2,3-dihydroxy-3-methylvalerate) into 2-oxo-3-methylpentanoate (2-oxo-3-methylvalerate) and of (2R)-2,3-dihydroxy-3-methylbutanoate (2,3-dihydroxyisovalerate) into 2-oxo-3-methylbutanoate (2-oxoisovalerate), the penultimate precursor to L-isoleucine and L-valine, respectively. This is Dihydroxy-acid dehydratase from Shewanella sp. (strain ANA-3).